The sequence spans 185 residues: Ribosome-recycling factor (185 aa).

Belongs to the RRF family.

It localises to the cytoplasm. Its function is as follows. Responsible for the release of ribosomes from messenger RNA at the termination of protein biosynthesis. May increase the efficiency of translation by recycling ribosomes from one round of translation to another. In Wolbachia pipientis subsp. Culex pipiens (strain wPip), this protein is Ribosome-recycling factor.